Here is a 296-residue protein sequence, read N- to C-terminus: NADH-cytochrome b5 reductase 2 (296 aa).

The chain crosses the membrane as a helical span at residues 12-29 (LPIALGVGAASIATAIIL). One can recognise an FAD-binding FR-type domain in the interval 47 to 151 (NEWIDLPIIK…KGPITKWEWK (105 aa)). Residue 154 to 189 (SYDSITLLGAGTGINPLYQLVHHIAENPEDNTKIHL) coordinates FAD.

It belongs to the flavoprotein pyridine nucleotide cytochrome reductase family. It depends on FAD as a cofactor.

The protein resides in the mitochondrion outer membrane. The catalysed reaction is 2 Fe(III)-[cytochrome b5] + NADH = 2 Fe(II)-[cytochrome b5] + NAD(+) + H(+). Functionally, may mediate the reduction of outer membrane cytochrome b5. This is NADH-cytochrome b5 reductase 2 (MCR1) from Kluyveromyces lactis (strain ATCC 8585 / CBS 2359 / DSM 70799 / NBRC 1267 / NRRL Y-1140 / WM37) (Yeast).